A 148-amino-acid chain; its full sequence is Nucleoside diphosphate kinase 1 (148 aa).

6 residues coordinate ATP: K9, F57, R85, T91, R102, and N112. The active-site Pros-phosphohistidine intermediate is the H115.

Belongs to the NDK family. Mg(2+) serves as cofactor. In terms of processing, the N-terminus is blocked.

The catalysed reaction is a 2'-deoxyribonucleoside 5'-diphosphate + ATP = a 2'-deoxyribonucleoside 5'-triphosphate + ADP. The enzyme catalyses a ribonucleoside 5'-diphosphate + ATP = a ribonucleoside 5'-triphosphate + ADP. In terms of biological role, major role in the synthesis of nucleoside triphosphates other than ATP. The ATP gamma phosphate is transferred to the NDP beta phosphate via a ping-pong mechanism, using a phosphorylated active-site intermediate. The polypeptide is Nucleoside diphosphate kinase 1 (NDPK1) (Spinacia oleracea (Spinach)).